Consider the following 176-residue polypeptide: Probable inosine/xanthosine triphosphatase (176 aa).

Asp36 is a Mg(2+) binding site.

This sequence belongs to the YjjX NTPase family. In terms of assembly, homodimer. Mg(2+) is required as a cofactor. It depends on Mn(2+) as a cofactor.

The enzyme catalyses XTP + H2O = XDP + phosphate + H(+). It carries out the reaction ITP + H2O = IDP + phosphate + H(+). Phosphatase that hydrolyzes non-canonical purine nucleotides such as XTP and ITP to their respective diphosphate derivatives. Probably excludes non-canonical purines from DNA/RNA precursor pool, thus preventing their incorporation into DNA/RNA and avoiding chromosomal lesions. This is Probable inosine/xanthosine triphosphatase from Saccharolobus islandicus (strain M.14.25 / Kamchatka #1) (Sulfolobus islandicus).